The sequence spans 388 residues: MGRVGVLLLNLGGPDKLEDVAPFLFNLFSDPEIIRLPFRWLQKPLAWFIASRRTKTSQENYKQIGGGSPLRRITEAQGEALKEQLHYLGQEANIYVGMRYWHPYTEEAIALLTQDNLDNLVILPLYPQFSISTSGSSFRLLERLWQEDPKLQRLEYTVIPSWYKEPGYLQAMAELIRQEIEQFPHPDQVHVFFSAHGVPKSYVEEAGDPYQQEIEECTALIMQTLNRPNPHTLAYQSRVGPVEWLQPYTEDALKELGAQGVKDLVVVPISFVSEHIETLQEIDIEYREIAEEAGIHNFRRVPAPNTHPVFIRALADLVIDALNKPSFKLSQAAQIKKMVKMYPPESWEWGMTSSAEVWNGRIAMLGFIALIIELVTGQGLLHMIGLLQ.

Histidine 196 and glutamate 277 together coordinate Fe cation.

It belongs to the ferrochelatase family.

It is found in the cytoplasm. It catalyses the reaction heme b + 2 H(+) = protoporphyrin IX + Fe(2+). The protein operates within porphyrin-containing compound metabolism; protoheme biosynthesis; protoheme from protoporphyrin-IX: step 1/1. Its function is as follows. Catalyzes the ferrous insertion into protoporphyrin IX. This Nostoc sp. (strain PCC 7120 / SAG 25.82 / UTEX 2576) protein is Ferrochelatase.